The primary structure comprises 361 residues: Peptide chain release factor 1 (361 aa).

Gln-236 carries the post-translational modification N5-methylglutamine.

The protein belongs to the prokaryotic/mitochondrial release factor family. Methylated by PrmC. Methylation increases the termination efficiency of RF1.

It localises to the cytoplasm. In terms of biological role, peptide chain release factor 1 directs the termination of translation in response to the peptide chain termination codons UAG and UAA. The protein is Peptide chain release factor 1 of Lactobacillus delbrueckii subsp. bulgaricus (strain ATCC BAA-365 / Lb-18).